The sequence spans 146 residues: Hemoglobin subunit beta (146 aa).

One can recognise a Globin domain in the interval 2-146; sequence HWSAEEKQLI…VAHALARKYH (145 aa). Residues His-63 and His-92 each contribute to the heme b site.

This sequence belongs to the globin family. In terms of assembly, heterotetramer of two alpha chains and two beta chains. In terms of tissue distribution, red blood cells.

Functionally, involved in oxygen transport from the lung to the various peripheral tissues. This is Hemoglobin subunit beta (HBB) from Anser anser anser (Western greylag goose).